The primary structure comprises 303 residues: Sulfate adenylyltransferase subunit 2 (303 aa).

It belongs to the PAPS reductase family. CysD subfamily. In terms of assembly, heterodimer composed of CysD, the smaller subunit, and CysN.

It catalyses the reaction sulfate + ATP + H(+) = adenosine 5'-phosphosulfate + diphosphate. It functions in the pathway sulfur metabolism; hydrogen sulfide biosynthesis; sulfite from sulfate: step 1/3. Its function is as follows. With CysN forms the ATP sulfurylase (ATPS) that catalyzes the adenylation of sulfate producing adenosine 5'-phosphosulfate (APS) and diphosphate, the first enzymatic step in sulfur assimilation pathway. APS synthesis involves the formation of a high-energy phosphoric-sulfuric acid anhydride bond driven by GTP hydrolysis by CysN coupled to ATP hydrolysis by CysD. The chain is Sulfate adenylyltransferase subunit 2 from Bacteroides fragilis (strain YCH46).